The chain runs to 479 residues: Ribosomal RNA small subunit methyltransferase F (479 aa).

Residues 125–131 (AAAPGSK), E149, D176, and D194 each bind S-adenosyl-L-methionine. The Nucleophile role is filled by C247.

This sequence belongs to the class I-like SAM-binding methyltransferase superfamily. RsmB/NOP family.

The protein resides in the cytoplasm. It catalyses the reaction cytidine(1407) in 16S rRNA + S-adenosyl-L-methionine = 5-methylcytidine(1407) in 16S rRNA + S-adenosyl-L-homocysteine + H(+). Its function is as follows. Specifically methylates the cytosine at position 1407 (m5C1407) of 16S rRNA. This Escherichia coli O139:H28 (strain E24377A / ETEC) protein is Ribosomal RNA small subunit methyltransferase F.